A 126-amino-acid polypeptide reads, in one-letter code: Late histone H2A.3, gonadal (126 aa).

The span at Met1–Ser18 shows a compositional bias: basic residues. The interval Met1 to Ala21 is disordered. N-acetylserine is present on Ser2. Ser2 bears the Phosphoserine mark. Position 104 is an N5-methylglutamine (Gln104). Lys119 is covalently cross-linked (Glycyl lysine isopeptide (Lys-Gly) (interchain with G-Cter in ubiquitin)).

It belongs to the histone H2A family. As to quaternary structure, the nucleosome is a histone octamer containing two molecules each of H2A, H2B, H3 and H4 assembled in one H3-H4 heterotetramer and two H2A-H2B heterodimers. The octamer wraps approximately 147 bp of DNA. Post-translationally, monoubiquitination of Lys-119 gives a specific tag for epigenetic transcriptional repression. In terms of processing, phosphorylation of Ser-2 directly represses transcription.

The protein resides in the nucleus. It is found in the chromosome. Functionally, core component of nucleosome. Nucleosomes wrap and compact DNA into chromatin, limiting DNA accessibility to the cellular machineries which require DNA as a template. Histones thereby play a central role in transcription regulation, DNA repair, DNA replication and chromosomal stability. DNA accessibility is regulated via a complex set of post-translational modifications of histones, also called histone code, and nucleosome remodeling. The polypeptide is Late histone H2A.3, gonadal (Psammechinus miliaris (Green sea urchin)).